The primary structure comprises 433 residues: D-amino acid dehydrogenase (433 aa).

Residue Val-3–Tyr-17 participates in FAD binding.

Belongs to the DadA oxidoreductase family. It depends on FAD as a cofactor.

It catalyses the reaction a D-alpha-amino acid + A + H2O = a 2-oxocarboxylate + AH2 + NH4(+). The protein operates within amino-acid degradation; D-alanine degradation; NH(3) and pyruvate from D-alanine: step 1/1. Functionally, oxidative deamination of D-amino acids. This Pseudomonas savastanoi pv. phaseolicola (strain 1448A / Race 6) (Pseudomonas syringae pv. phaseolicola (strain 1448A / Race 6)) protein is D-amino acid dehydrogenase.